The sequence spans 59 residues: Large ribosomal subunit protein uL30 (59 aa).

The protein belongs to the universal ribosomal protein uL30 family. In terms of assembly, part of the 50S ribosomal subunit.

The chain is Large ribosomal subunit protein uL30 from Mycobacterium sp. (strain JLS).